The following is a 440-amino-acid chain: Protein scalloped (440 aa).

The segment at 32–65 (TEQQAVGPGTIPSPWTPVNAGPPGALGSADTNGS) is disordered. The TEA DNA-binding region spans 86–162 (SADAEGVWSP…QVLARRKLRE (77 aa)).

As to quaternary structure, the C-terminus of sd interacts with the C-terminal serine-rich protein domain of vg, to form a complex which acts as a selector for wing development. Interacts (via C-terminus) with yki (via N-terminus) and this interaction enhances its transcriptional activity. As to expression, subset of neuroblasts in the central nervous system and in the peripheral sense organs of the embryo. Expressed in the developing wing primordia initially along the D/V wing boundary, and by the late third larval instar, maximal expression is seen in cells at the D/V wing disk boundary. Less expression in cells located farther from this boundary. Also expressed in wing progenitor cells.

The protein localises to the nucleus. Its function is as follows. Transcription factor which plays a key role in the Hippo/SWH (Sav/Wts/Hpo) signaling pathway, a signaling pathway that plays a pivotal role in organ size control and tumor suppression by restricting proliferation and promoting apoptosis. The core of this pathway is composed of a kinase cascade wherein Hippo (Hpo), in complex with its regulatory protein Salvador (Sav), phosphorylates and activates Warts (Wts) in complex with its regulatory protein Mats, which in turn phosphorylates and inactivates the Yorkie (Yki) oncoprotein. The Hippo/SWH signaling pathway inhibits the activity of the transcriptional complex formed by Scalloped (sd) and Yki and the target genes of this pathway include cyclin-E (cycE), diap1 and bantam. Sd promotes nuclear localization of Yki. Involved in the regulation of cell-specific gene expression during development, particularly in the differentiation of the nervous system. When in combination with vestigial (vg) it acts as a transcriptional activation complex that regulates gene expression in the wing. Binding to vg switches the DNA target selectivity of sd. Required autonomously for cell proliferation and viability within the wing blade. Required for proper sensory organ precursor (SOP) differentiation at the wing margin; required for correct expression of sens. This is Protein scalloped (sd) from Drosophila melanogaster (Fruit fly).